The primary structure comprises 642 residues: Threonine--tRNA ligase (642 aa).

Residues 1-61 (MPVITLPDGS…DTDAQLAIIT (61 aa)) form the TGS domain. The interval 243–534 (DHRKIGKQLD…LTEEFAGFFP (292 aa)) is catalytic. Zn(2+)-binding residues include cysteine 334, histidine 385, and histidine 511.

It belongs to the class-II aminoacyl-tRNA synthetase family. Homodimer. Zn(2+) is required as a cofactor.

It is found in the cytoplasm. The enzyme catalyses tRNA(Thr) + L-threonine + ATP = L-threonyl-tRNA(Thr) + AMP + diphosphate + H(+). Catalyzes the attachment of threonine to tRNA(Thr) in a two-step reaction: L-threonine is first activated by ATP to form Thr-AMP and then transferred to the acceptor end of tRNA(Thr). Also edits incorrectly charged L-seryl-tRNA(Thr). The chain is Threonine--tRNA ligase from Pectobacterium atrosepticum (strain SCRI 1043 / ATCC BAA-672) (Erwinia carotovora subsp. atroseptica).